A 902-amino-acid chain; its full sequence is U3 small nucleolar RNA-associated protein 21 homolog (902 aa).

WD repeat units lie at residues 40–71 (DIEARGTHFLVTTSVGNTFQTYDCEKLNLLFV), 80–110 (TCLKSFKDFMLVAAGSKIFAYKRGKIIWDID), 119–154 (THLDAFGEWIIACTSSRHVYVWKHASKYSVPELHTT), 164–198 (TSLLHPSTYLNKILLGFSDGALQIWNLRVSKRVHE), 206–243 (GITSLTQAPVLDVLAVGTISGRIVIFNLKNGSILMEFK), 249–284 (LSCSFRTDGTPILASSNPIGDLSFWDLSKRRIQNVT), 289–332 (FGSL…RSRN), 339–373 (SFVKFYGKSVHFLISAATDRSLRAVSLYQDSQSTE), 399–438 (TALSSSNTREKYWDNVLTAHKNDSSARTWNWKSKTLGQHV), 447–481 (VRSVCVSCCGNFGLIGSSKGVVDVYNMQSGIKRKS), 492–528 (VTAVMLDNVNRILVTASLDGILKFWDFNKGNLIDSLD), 533–568 (ITHAIYQHSSDLVAVACDDFGIRIVDVQTRKIVREL), 570–611 (GHSN…DSIS), and 613–651 (PSVCTSLTFAPTGDYLATTHVDQVGISLWTNLSMFKHVS).

In terms of assembly, interacts with snoRNA U3. Interacts with MPP10. Component of the ribosomal small subunit (SSU) processome composed of at least 40 protein subunits and snoRNA U3.

The protein resides in the nucleus. It is found in the nucleolus. Its function is as follows. Involved in nucleolar processing of pre-18S ribosomal RNA and ribosome assembly. This is U3 small nucleolar RNA-associated protein 21 homolog from Schizosaccharomyces pombe (strain 972 / ATCC 24843) (Fission yeast).